A 210-amino-acid chain; its full sequence is Ras-related protein Rab-8 (210 aa).

Residue 15–22 coordinates GTP; the sequence is GDSGVGKT. The Effector region signature appears at 37 to 45; it reads FISTIGIDF. GTP-binding positions include 63–67 and 121–124; these read DTAGQ and NKCD. At cysteine 207 the chain carries Cysteine methyl ester. Cysteine 207 carries S-geranylgeranyl cysteine lipidation. A propeptide spans 208-210 (removed in mature form); it reads SLL.

This sequence belongs to the small GTPase superfamily. Rab family.

The protein resides in the cell membrane. This chain is Ras-related protein Rab-8, found in Diplobatis ommata (Ocellated electric ray).